The primary structure comprises 207 residues: N-(5'-phosphoribosyl)anthranilate isomerase (207 aa).

Belongs to the TrpF family.

The catalysed reaction is N-(5-phospho-beta-D-ribosyl)anthranilate = 1-(2-carboxyphenylamino)-1-deoxy-D-ribulose 5-phosphate. The protein operates within amino-acid biosynthesis; L-tryptophan biosynthesis; L-tryptophan from chorismate: step 3/5. This is N-(5'-phosphoribosyl)anthranilate isomerase from Petrotoga mobilis (strain DSM 10674 / SJ95).